We begin with the raw amino-acid sequence, 2207 residues long: Mediator of RNA polymerase II transcription subunit 13-like (2207 aa).

Residues 337–355 (VQSAASHLGSQDGGMSTMH) show a composition bias toward polar residues. 4 disordered regions span residues 337–368 (VQSA…PKLH), 384–403 (AQSK…AAHS), 431–479 (VGPS…KRPL), and 519–574 (KYDK…VPVN). Positions 356–368 (SPKRSRKTPPKLH) are enriched in basic residues. Polar residues predominate over residues 384-394 (AQSKRSQMSTP). Low complexity predominate over residues 442 to 453 (PGFSAGLPSSSS). Basic and acidic residues predominate over residues 463-475 (KTTERQEKGDKLQ). Residues 528-539 (SRNTSKQMNLNP) are compositionally biased toward polar residues. Pro residues predominate over residues 546-555 (PISPLPPTLS). A phosphoserine mark is found at Ser548 and Ser555. The LXXLL motif 1 motif lies at 664 to 668 (LQRLL). Over residues 731 to 747 (GTEKDSLKKNKSEDGFG) the composition is skewed to basic and acidic residues. The tract at residues 731-767 (GTEKDSLKKNKSEDGFGTKDVTTPGHSTPVPDGKNAM) is disordered. A phosphoserine mark is found at Ser812 and Ser821. A disordered region spans residues 816–847 (ELGAVSPALRSSKMPTVGTEERPPGKDGRAAG). Basic and acidic residues predominate over residues 834-844 (TEERPPGKDGR). Ser918 is modified (phosphoserine). The segment at 1004-1091 (DPDYVNTPQM…STTRPLNSVE (88 aa)) is disordered. Positions 1009–1019 (NTPQMNTPVTL) are enriched in polar residues. Positions 1020–1031 (NSAAPASNSGAG) are enriched in low complexity. The segment covering 1072 to 1087 (TDQGSPASTPSTTRPL) has biased composition (polar residues). The LXXLL motif 2 motif lies at 1224 to 1228 (LLLLL). The leucine-zipper stretch occupies residues 1379-1400 (LPIPTLLVGYDKEFLTISPFSL). 2 disordered regions span residues 1523-1652 (LMPP…SVTE) and 2042-2077 (GNLH…QGER). The segment covering 1541–1593 (PGNAGSLPSNSGSGAPPAGSAFNPTSSSSANPTTSSSSASSGPPGSSAASAPG) has biased composition (low complexity). Polar residues-rich tracts occupy residues 1612–1624 (QNPS…TDRT) and 1635–1649 (PGQS…GQDS). A Phosphoserine modification is found at Ser2080.

This sequence belongs to the Mediator complex subunit 13 family. Component of the Mediator complex, which is composed of MED1, MED4, MED6, MED7, MED8, MED9, MED10, MED11, MED12, MED13, MED13L, MED14, MED15, MED16, MED17, MED18, MED19, MED20, MED21, MED22, MED23, MED24, MED25, MED26, MED27, MED29, MED30, MED31, CCNC, CDK8 and CDC2L6/CDK11. The MED12, MED13, CCNC and CDK8 subunits form a distinct module termed the CDK8 module. Mediator containing the CDK8 module is less active than Mediator lacking this module in supporting transcriptional activation. Individual preparations of the Mediator complex lacking one or more distinct subunits have been variously termed ARC, CRSP, DRIP, PC2, SMCC and TRAP. In terms of tissue distribution, highly expressed in heart and weakly expressed in brain, spleen, lung, liver, kidney and testis.

It localises to the nucleus. Component of the Mediator complex, a coactivator involved in the regulated transcription of nearly all RNA polymerase II-dependent genes. Mediator functions as a bridge to convey information from gene-specific regulatory proteins to the basal RNA polymerase II transcription machinery. Mediator is recruited to promoters by direct interactions with regulatory proteins and serves as a scaffold for the assembly of a functional preinitiation complex with RNA polymerase II and the general transcription factors. This subunit may specifically regulate transcription of targets of the Wnt signaling pathway and SHH signaling pathway. This is Mediator of RNA polymerase II transcription subunit 13-like (Med13l) from Mus musculus (Mouse).